Here is a 231-residue protein sequence, read N- to C-terminus: MNDSRIIVALDFSDQGTALNFAATLDSRLCRIKVGKELFTLAGPQLIEKLMRLGFDVFLDLKFHDIPNTVAAACSVASSLGVWMINVHALGGSKMLLAARQALDGKRTRLIAVTLLTSMNHDDLSELGISGSPEIIVQRLALLAQRCGLDGVVCSALEAASLREKAGKDFWLITPGIRSSNDNRDDQARIATPTMAIRNGASYLVIGRPITRSPDPLKALQRFNDEIVSAL.

Substrate contacts are provided by residues aspartate 11, lysine 33, 60 to 69 (DLKFHDIPNT), threonine 117, arginine 178, glutamine 187, glycine 207, and arginine 208. Lysine 62 functions as the Proton donor in the catalytic mechanism.

It belongs to the OMP decarboxylase family. Type 1 subfamily. As to quaternary structure, homodimer.

It carries out the reaction orotidine 5'-phosphate + H(+) = UMP + CO2. It participates in pyrimidine metabolism; UMP biosynthesis via de novo pathway; UMP from orotate: step 2/2. Functionally, catalyzes the decarboxylation of orotidine 5'-monophosphate (OMP) to uridine 5'-monophosphate (UMP). The sequence is that of Orotidine 5'-phosphate decarboxylase from Nitrosomonas eutropha (strain DSM 101675 / C91 / Nm57).